Reading from the N-terminus, the 335-residue chain is DNA polymerase beta (335 aa).

K41 is covalently cross-linked (Glycyl lysine isopeptide (Lys-Gly) (interchain with G-Cter in ubiquitin)). K60 contacts K(+). Residue K60 coordinates Na(+). Residue K61 forms a Glycyl lysine isopeptide (Lys-Gly) (interchain with G-Cter in ubiquitin) linkage. Residues L62 and V65 each coordinate K(+). 2 residues coordinate Na(+): L62 and V65. K72 serves as the catalytic Nucleophile; Schiff-base intermediate with DNA; for 5'-dRP lyase activity. K72 bears the N6-acetyllysine mark. K81 participates in a covalent cross-link: Glycyl lysine isopeptide (Lys-Gly) (interchain with G-Cter in ubiquitin). R83 carries the post-translational modification Omega-N-methylarginine; by PRMT6. Residues T101, V103, and I106 each contribute to the K(+) site. Na(+) is bound by residues T101, V103, and I106. R149 serves as a coordination point for a 2'-deoxyribonucleoside 5'-triphosphate. An Omega-N-methylarginine; by PRMT6 modification is found at R152. S180, R183, G189, and D190 together coordinate a 2'-deoxyribonucleoside 5'-triphosphate. Residues 183–192 (RGAESSGDMD) form a DNA-binding region. Residues D190, D192, and D256 each contribute to the Mg(2+) site.

Belongs to the DNA polymerase type-X family. Monomer. Binds single-stranded DNA (ssDNA). Interacts with APEX1, LIG1, LIG3, FEN1, PCNA and XRCC1. Interacts with HUWE1/ARF-BP1, STUB1/CHIP and USP47. Interacts with FAM168A. The cofactor is Mg(2+). Methylation by PRMT6 stimulates the polymerase activity by enhancing DNA binding and processivity. Post-translationally, ubiquitinated at Lys-41, Lys-61 and Lys-81: monoubiquitinated by HUWE1/ARF-BP1. Monoubiquitinated protein is then the target of STUB1/CHIP, which catalyzes polyubiquitination from monoubiquitin, leading to degradation by the proteasome. USP47 mediates the deubiquitination of monoubiquitinated protein, preventing polyubiquitination by STUB1/CHIP and its subsequent degradation.

The protein resides in the nucleus. Its subcellular location is the cytoplasm. It catalyses the reaction DNA(n) + a 2'-deoxyribonucleoside 5'-triphosphate = DNA(n+1) + diphosphate. It carries out the reaction a 5'-end 2'-deoxyribose-2'-deoxyribonucleotide-DNA = (2E,4S)-4-hydroxypenten-2-al-5-phosphate + a 5'-end 5'-phospho-2'-deoxyribonucleoside-DNA + H(+). The catalysed reaction is 2'-deoxyribonucleotide-(2'-deoxyribose 5'-phosphate)-2'-deoxyribonucleotide-DNA = a 3'-end 2'-deoxyribonucleotide-(2,3-dehydro-2,3-deoxyribose 5'-phosphate)-DNA + a 5'-end 5'-phospho-2'-deoxyribonucleoside-DNA + H(+). In terms of biological role, repair polymerase that plays a key role in base-excision repair. During this process, the damaged base is excised by specific DNA glycosylases, the DNA backbone is nicked at the abasic site by an apurinic/apyrimidic (AP) endonuclease, and POLB removes 5'-deoxyribose-phosphate from the preincised AP site acting as a 5'-deoxyribose-phosphate lyase (5'-dRP lyase); through its DNA polymerase activity, it adds one nucleotide to the 3' end of the arising single-nucleotide gap. Conducts 'gap-filling' DNA synthesis in a stepwise distributive fashion rather than in a processive fashion as for other DNA polymerases. It is also able to cleave sugar-phosphate bonds 3' to an intact AP site, acting as an AP lyase. The sequence is that of DNA polymerase beta (POLB) from Bos taurus (Bovine).